The following is a 246-amino-acid chain: 2-C-methyl-D-erythritol 4-phosphate cytidylyltransferase (246 aa).

The protein belongs to the IspD/TarI cytidylyltransferase family. IspD subfamily.

It carries out the reaction 2-C-methyl-D-erythritol 4-phosphate + CTP + H(+) = 4-CDP-2-C-methyl-D-erythritol + diphosphate. Its pathway is isoprenoid biosynthesis; isopentenyl diphosphate biosynthesis via DXP pathway; isopentenyl diphosphate from 1-deoxy-D-xylulose 5-phosphate: step 2/6. In terms of biological role, catalyzes the formation of 4-diphosphocytidyl-2-C-methyl-D-erythritol from CTP and 2-C-methyl-D-erythritol 4-phosphate (MEP). The protein is 2-C-methyl-D-erythritol 4-phosphate cytidylyltransferase of Chlorobaculum parvum (strain DSM 263 / NCIMB 8327) (Chlorobium vibrioforme subsp. thiosulfatophilum).